We begin with the raw amino-acid sequence, 327 residues long: Nucleotide-binding protein CYB_0992 (327 aa).

Residue 12-19 coordinates ATP; that stretch reads GLTGAGKT.

It belongs to the RapZ-like family.

Functionally, displays ATPase and GTPase activities. The protein is Nucleotide-binding protein CYB_0992 of Synechococcus sp. (strain JA-2-3B'a(2-13)) (Cyanobacteria bacterium Yellowstone B-Prime).